The chain runs to 357 residues: EGF-like domain-containing protein 2 (357 aa).

The first 20 residues, 1-20 (MPPSLSHLFLLSTFASLALC), serve as a signal peptide directing secretion. 2 consecutive EGF-like domains span residues 21–55 (SFYC…FNCG) and 61–93 (ISAA…PTCQ). 6 cysteine pairs are disulfide-bonded: Cys-24–Cys-37, Cys-31–Cys-43, Cys-45–Cys-54, Cys-65–Cys-75, Cys-69–Cys-81, and Cys-83–Cys-92.

As to expression, prismatic layer of shell (at protein level). Expressed primarily in the mantle with highest level in the mantle edge and lower level in the mantle pallium.

The protein resides in the secreted. This is EGF-like domain-containing protein 2 from Pinctada maxima (Silver-lipped pearl oyster).